The sequence spans 559 residues: 2-isopropylmalate synthase (559 aa).

In terms of domain architecture, Pyruvate carboxyltransferase spans 33-307 (PIWCSSDLRD…NPELDFSDID (275 aa)). Aspartate 42, histidine 246, histidine 248, and asparagine 282 together coordinate Mg(2+). The tract at residues 439-559 (ANTPYALVSH…SLSEQQAKAA (121 aa)) is regulatory domain.

The protein belongs to the alpha-IPM synthase/homocitrate synthase family. LeuA type 2 subfamily. Homodimer. Mg(2+) serves as cofactor.

Its subcellular location is the cytoplasm. The catalysed reaction is 3-methyl-2-oxobutanoate + acetyl-CoA + H2O = (2S)-2-isopropylmalate + CoA + H(+). It participates in amino-acid biosynthesis; L-leucine biosynthesis; L-leucine from 3-methyl-2-oxobutanoate: step 1/4. In terms of biological role, catalyzes the condensation of the acetyl group of acetyl-CoA with 3-methyl-2-oxobutanoate (2-ketoisovalerate) to form 3-carboxy-3-hydroxy-4-methylpentanoate (2-isopropylmalate). The chain is 2-isopropylmalate synthase from Pseudomonas fluorescens (strain ATCC BAA-477 / NRRL B-23932 / Pf-5).